Consider the following 184-residue polypeptide: UPF0301 protein Rsph17029_2659 (184 aa).

Belongs to the UPF0301 (AlgH) family.

This Cereibacter sphaeroides (strain ATCC 17029 / ATH 2.4.9) (Rhodobacter sphaeroides) protein is UPF0301 protein Rsph17029_2659.